Here is a 388-residue protein sequence, read N- to C-terminus: Glutamine transporter 2 (388 aa).

11 helical membrane-spanning segments follow: residues 5 to 27, 31 to 53, 86 to 106, 121 to 141, 147 to 167, 186 to 206, 218 to 238, 268 to 288, 302 to 322, 326 to 346, and 368 to 388; these read LFGSALILSGTALGAGMLAIPMV, FGLFYSTLLMLIICAGTTYAALL, LFYLLLFCMLIAYILGAADLI, FAQVAFTLFASAFVVCGTQII, LLFFFMISMLVLTLIILIPGM, TSTILFTSFASMPVIPSLVAY, MVILGSIIPLICYLVWLYAVV, IILSIFTSLALLTSFLGVAMA, IVTYVCTFILPLLGAGLAADQ, VLGYAGVILVFLAIFIPLAMV, and GGKLALGLTLLFGLLLLISQI.

Belongs to the amino acid/polyamine transporter 2 family.

The protein localises to the cell inner membrane. Seems to be involved in glutamine transport. Complements an E.coli glnP deletion mutant. This chain is Glutamine transporter 2, found in Aliivibrio fischeri (strain ATCC 700601 / ES114) (Vibrio fischeri).